The following is a 71-amino-acid chain: Palustrin-2AJ2 (71 aa).

Residues 1–22 (MFTLKKPLLVLLFLGTVSLSLC) form the signal peptide. The propeptide occupies 23–40 (EQERAADDDEGEVIEEEV). A disulfide bridge links Cys65 with Cys71.

As to expression, expressed by the skin glands.

The protein resides in the secreted. Displays broad-spectrum antibacterial activity against a range of Gram-positive and Gram-negative bacteria. Has low hemolytic activity, low cytotoxicity and low antioxidant activity. In Amolops jingdongensis (Chinese torrent frog), this protein is Palustrin-2AJ2.